The chain runs to 432 residues: Acetylserotonin O-methyltransferase (432 aa).

S-adenosyl-L-methionine contacts are provided by residues tyrosine 146, tryptophan 163, aspartate 209, 235 to 237 (GDF), and arginine 252. Histidine 255 (proton donor/acceptor) is an active-site residue. Residues aspartate 256, asparagine 302, and glutamine 306 each coordinate substrate. The interval 373-432 (VPGARSDAAGTGSGTGNTGSGIMLQGETLESEVSAPQAGSDVGGAGNEPRSGTLKQGDWK) is disordered.

It belongs to the class I-like SAM-binding methyltransferase superfamily. Cation-independent O-methyltransferase family. In terms of assembly, homodimer. As to expression, expressed predominantly in the pineal gland (at protein level). Very low expression, if any, in the retina.

The enzyme catalyses N-acetylserotonin + S-adenosyl-L-methionine = melatonin + S-adenosyl-L-homocysteine + H(+). The protein operates within aromatic compound metabolism; melatonin biosynthesis; melatonin from serotonin: step 1/2. Catalyzes the transfer of a methyl group onto N-acetylserotonin, producing melatonin (N-acetyl-5-methoxytryptamine). In Rattus norvegicus (Rat), this protein is Acetylserotonin O-methyltransferase (Asmt).